Consider the following 1035-residue polypeptide: Putative protein FAM47C (1035 aa).

Disordered regions lie at residues Met1–Tyr21 and Leu159–Ser797. Residues Leu159–Asp173 show a composition bias toward basic and acidic residues. Pro residues predominate over residues Pro380–Pro392. Basic and acidic residues predominate over residues Pro478–Pro490. The segment covering Ser533–Ser544 has biased composition (polar residues). Composition is skewed to basic and acidic residues over residues Pro611–Pro622, Pro683–Pro694, and Glu753–Pro766.

The protein belongs to the FAM47 family.

The chain is Putative protein FAM47C (FAM47C) from Homo sapiens (Human).